The following is a 172-amino-acid chain: Small ribosomal subunit protein uS5 (172 aa).

The S5 DRBM domain occupies 17 to 80 (LREKMISVNR…EQARRNMFKV (64 aa)).

The protein belongs to the universal ribosomal protein uS5 family. In terms of assembly, part of the 30S ribosomal subunit. Contacts proteins S4 and S8.

In terms of biological role, with S4 and S12 plays an important role in translational accuracy. Located at the back of the 30S subunit body where it stabilizes the conformation of the head with respect to the body. In Burkholderia lata (strain ATCC 17760 / DSM 23089 / LMG 22485 / NCIMB 9086 / R18194 / 383), this protein is Small ribosomal subunit protein uS5.